Reading from the N-terminus, the 701-residue chain is Putative pentatricopeptide repeat-containing protein At3g25970 (701 aa).

PPR repeat units follow at residues 34–64 (DIYV…MPKR), 65–99 (DSVS…GSDV), 100–134 (DGYS…GYEC), 135–165 (NVYV…ISEP), 166–200 (NSVS…AAVT), 202–236 (DAGT…GLQH), 237–267 (EITI…LGGS), 269–303 (DLIS…WVET), 304–338 (DIYT…GLEQ), 339–371 (VTSA…LKSK), 372–406 (DLIS…EIKV), 407–441 (DDYA…GFVS), 442–472 (NEFV…ISSK), 474–508 (STVA…NVKL), 509–539 (DHVT…MEPV), and 545–575 (RMEH…MPLN). The interval 580 to 655 (VLKTFLGVCR…VPGWSWIEIR (76 aa)) is type E motif. The tract at residues 656 to 686 (NQVKAFNAEDRSNPLCQDIYMMIKDLTQEMQ) is type E(+) motif.

Belongs to the PPR family. PCMP-E subfamily.

This Arabidopsis thaliana (Mouse-ear cress) protein is Putative pentatricopeptide repeat-containing protein At3g25970 (PCMP-E46).